The chain runs to 66 residues: MKPSLIIVTFIVVFMTISCVAADDEQETWIEKRGDCLPHLKRCKENNDCCSKKCKRRGANPEKRCR.

Residues 1–22 form the signal peptide; sequence MKPSLIIVTFIVVFMTISCVAA. A propeptide spanning residues 23–31 is cleaved from the precursor; that stretch reads DDEQETWIE. 3 disulfides stabilise this stretch: C36–C50, C43–C54, and C49–C65. Positions 55 to 57 are essential for stimulation of [3H]ryanodine binding to RYR1; that stretch reads KRR.

Belongs to the scorpion calcin family. In terms of tissue distribution, expressed by the venom gland.

The protein resides in the secreted. This toxin stabilizes ryanodine receptor 1 (RyR1) opening in a long-lasting subconductance state (40% of the full conductance state). Furthermore, it triggers calcium release from sarcoplasmic vesicles (64.2 nM are enough to induce a sharp release, and 50% of the total calcium is released after toxin (100 nM) addition) probably by acting as a cell-penetrating peptide (CPP). In addition, it has been shown to dose-dependently stimulate ryanodine binding to RyR1 (EC(50)=3.2 nM). It also augments the bell-shaped calcium-[3H]ryanodine binding curve that is maximal at about 10 uM calcium concentration. It binds a different site as ryanodine. It acts synergistically with caffeine. In vivo, intracerebroventricular injection into mice induces neurotoxic symptoms, followed by death. The sequence is that of Opicalcin-2 from Opistophthalmus carinatus (African yellow leg scorpion).